The following is a 104-amino-acid chain: Putative pterin-4-alpha-carbinolamine dehydratase (104 aa).

Belongs to the pterin-4-alpha-carbinolamine dehydratase family.

The enzyme catalyses (4aS,6R)-4a-hydroxy-L-erythro-5,6,7,8-tetrahydrobiopterin = (6R)-L-erythro-6,7-dihydrobiopterin + H2O. The protein is Putative pterin-4-alpha-carbinolamine dehydratase (pcbD) of Rhizobium meliloti (strain 1021) (Ensifer meliloti).